We begin with the raw amino-acid sequence, 353 residues long: Protein Wnt-11b-1 (353 aa).

An N-terminal signal peptide occupies residues 1–22 (MAQIHHCVTLLLILCCSGLCGA). N31, N38, and N88 each carry an N-linked (GlcNAc...) asparagine glycan. Cystine bridges form between C78–C89, C128–C136, C138–C155, C208–C222, and C210–C217. The O-palmitoleoyl serine; by PORCN moiety is linked to residue S214. A sulfotyrosine mark is found at Y274 and Y281. Disulfide bonds link C282/C313, C298/C308, C312/C352, C328/C343, C330/C340, and C335/C336. Residue N299 is glycosylated (N-linked (GlcNAc...) asparagine).

It belongs to the Wnt family. As to quaternary structure, homodimer. Secreted homodimers form a complex with wnt5a homodimers; tyrosine sulfation of both wnt11 and wnt5a by tpst1 is required for this interaction. Interacts with the transmembrane receptor fzd7/fz7. Interacts with lrp6 and ryk. Interacts with tdgf1/frl1. Interacts weakly with frzb1 and strongly with frzb2/crescent. Interaction with frzb2/crescent antagonizes wnt11 function in the neuroectoderm, but enhances it in mesodermal tissue. In terms of processing, glycosylation is required for protein secretion. Post-translationally, palmitoleoylation is required for efficient binding to frizzled receptors. Depalmitoleoylation leads to Wnt signaling pathway inhibition.

It is found in the secreted. The protein localises to the extracellular space. Its subcellular location is the extracellular matrix. Its function is as follows. Ligand for the frizzled7 transmembrane receptor. Primarily acts via non-canonical Wnt pathways mediated by either Ca(2+) and PKC, or by JNK and dvl2/dsh. Depending on the cellular context, can also signal via the canonical Wnt pathway mediated by beta-catenin and dvl2/dsh. May also inhibit canonical Wnt signaling. Maternally initiates dorsal/ventral axis formation by a canonical route, which signals via lrp6. In a complex with wnt5a, activates the canonical and non-canonical processes involved in axis formation. In the non-canonical pathway, acts through fzd7/fz7 to induce phosphorylation of dvl2/dsh. Signals through a non-canonical Wnt pathway to regulate convergent extension movements during gastrulation. Interactions with the secreted Wnt antagonist sfrp5 to coordinate foregut development, acting via a non-canonical wnt pathway whereby sfrp5 restricts wnt11b activity to prevent inappropriate foregut formation. Mediates cardiogenesis via non-canonical Wnt signaling involving JNK-activation and PKC. Acts redundantly with wnt11/wnt11r during pronephros induction. This is Protein Wnt-11b-1 from Xenopus tropicalis (Western clawed frog).